Reading from the N-terminus, the 139-residue chain is Iron-sulfur cluster assembly 1 homolog, mitochondrial (139 aa).

Fe cation-binding residues include Cys52, Cys117, and Cys119.

Belongs to the HesB/IscA family.

It is found in the mitochondrion. Involved in the assembly of mitochondrial iron-sulfur proteins. Probably involved in the binding of an intermediate of Fe/S cluster assembly. This Dictyostelium discoideum (Social amoeba) protein is Iron-sulfur cluster assembly 1 homolog, mitochondrial (isca1).